An 88-amino-acid polypeptide reads, in one-letter code: Small ribosomal subunit protein uS17 (88 aa).

It belongs to the universal ribosomal protein uS17 family. As to quaternary structure, part of the 30S ribosomal subunit.

One of the primary rRNA binding proteins, it binds specifically to the 5'-end of 16S ribosomal RNA. In Lactobacillus acidophilus (strain ATCC 700396 / NCK56 / N2 / NCFM), this protein is Small ribosomal subunit protein uS17.